The chain runs to 481 residues: MTSPVENSTSTEKLTLAEKVWRDHVVSKGENGEPDLLYIDLQLLHEVTSPQAFDGLRMTGRKLRHPELHLATEDHNVPTEGIKTGSLLEINDQISRLQVSTLRDNCEEFGVRLHPMGDVRQGIVHTVGPQLGATQPGMTIVCGDSHTSXHGAFGSMAFGIGTSEVEHVMATQTLPLKPFKTMAIEVTGELQPGVSSKDLILAIIAKIGTGGGQGYVLEYRGEAIRKMSMDARMTMCNMSIEAGARAGMIAPDQTTFDYVEGREMAPKGADWDEAVAYWKTLPTDEGATFDKVVEIDGSALTPFITWGTNPGQGLPLGESVPSPEDFTNDNDKAAAEKALQYMDLVPGTPLRDIKIDTVFLGSCTNARIEDLQIAADILKGHKIADGMRMMVVPSSTWIKQEAEALGLDKIFTDAGAEWRTAGCSMCLGMNPDQLKPGERSASTSNRNFEGRQGPGGRTHLVSPAVAAATAIRGTLSSPADL.

The [4Fe-4S] cluster site is built by Cys-363, Cys-423, and Cys-426. A disordered region spans residues 432 to 459 (DQLKPGERSASTSNRNFEGRQGPGGRTH).

The protein belongs to the aconitase/IPM isomerase family. LeuC type 1 subfamily. As to quaternary structure, heterodimer of LeuC and LeuD. Requires [4Fe-4S] cluster as cofactor.

The enzyme catalyses (2R,3S)-3-isopropylmalate = (2S)-2-isopropylmalate. It functions in the pathway amino-acid biosynthesis; L-leucine biosynthesis; L-leucine from 3-methyl-2-oxobutanoate: step 2/4. Catalyzes the isomerization between 2-isopropylmalate and 3-isopropylmalate, via the formation of 2-isopropylmaleate. In Corynebacterium glutamicum (strain R), this protein is 3-isopropylmalate dehydratase large subunit.